A 468-amino-acid chain; its full sequence is Glutathione reductase (468 aa).

FAD-binding residues include serine 17 and glycine 18. Serine 17 serves as a coordination point for glutathione. Arginine 24 is a binding site for glutathione. Residues glutamate 38, threonine 45, cysteine 46, and lysine 54 each contribute to the FAD site. Cysteine 46 and cysteine 51 are oxidised to a cystine. Tyrosine 103 is a glutathione binding site. Alanine 119 serves as a coordination point for FAD. Residues alanine 185, isoleucine 188, glutamate 191, arginine 208, arginine 214, and glycine 276 each contribute to the NADP(+) site. Aspartate 317 provides a ligand contact to FAD. An NADP(+)-binding site is contributed by glutamate 323. Threonine 325 contributes to the FAD binding site. Glutathione is bound at residue arginine 333. Residue valine 358 participates in NADP(+) binding. Lysine 410 contacts glutathione. Position 457 (histidine 457) interacts with FAD. Histidine 457 acts as the Proton acceptor in catalysis.

The protein belongs to the class-I pyridine nucleotide-disulfide oxidoreductase family. Homodimer. The cofactor is FAD.

The protein localises to the cytoplasm. Its subcellular location is the mitochondrion. It catalyses the reaction 2 glutathione + NADP(+) = glutathione disulfide + NADPH + H(+). In terms of biological role, catalyzes the reduction of glutathione disulfide (GSSG) to reduced glutathione (GSH). Constitutes the major mechanism to maintain a high GSH:GSSG ratio in the cytosol. The polypeptide is Glutathione reductase (gtr-1) (Neurospora crassa (strain ATCC 24698 / 74-OR23-1A / CBS 708.71 / DSM 1257 / FGSC 987)).